Reading from the N-terminus, the 153-residue chain is UPF0127 protein TGAM_1372 (153 aa).

The protein belongs to the UPF0127 family.

In Thermococcus gammatolerans (strain DSM 15229 / JCM 11827 / EJ3), this protein is UPF0127 protein TGAM_1372.